The primary structure comprises 369 residues: Glycolate oxidase 1 (369 aa).

The 360-residue stretch at 1–360 (MGEITNVMEY…TRAHIYTDAD (360 aa)) folds into the FMN hydroxy acid dehydrogenase domain. Residue Y25 coordinates glyoxylate. FMN contacts are provided by residues 78–80 (PSA), S107, 128–130 (QLY), and T156. Y130 provides a ligand contact to glyoxylate. Position 165 (R165) interacts with glyoxylate. Positions 231 and 253 each coordinate FMN. The glyoxylate site is built by H255 and R258. Catalysis depends on H255, which acts as the Proton acceptor. Residues 286 to 290 (DGGVR) and 309 to 310 (GR) each bind FMN. Positions 367 to 369 (PRL) match the Microbody targeting signal motif.

It belongs to the FMN-dependent alpha-hydroxy acid dehydrogenase family. In terms of assembly, homotetramer. Interacts with rice dwarf virus (RDV) P8. This interaction promotes viral P8 relocation to virus factories peripheral to peroxisomes. Requires FMN as cofactor.

The protein resides in the peroxisome. The enzyme catalyses glycolate + O2 = glyoxylate + H2O2. Its pathway is photosynthesis; photorespiration; glycine from 2-phosphoglycolate: step 2/3. Catalyzes the oxidation of glycolate to glyoxylate, with a reduction of O2 to H2O2. Is a key enzyme in photorespiration in plants. Can exert a strong regulation over photosynthesis, possibly through a feed-back inhibition on Rubisco activase. Does not seem to play a role in oxalate accumulation. This Oryza sativa subsp. indica (Rice) protein is Glycolate oxidase 1 (GLO1).